We begin with the raw amino-acid sequence, 327 residues long: uncharacterized protein (327 aa).

Positions K12–E79 constitute an S4 RNA-binding domain. The active site involves D136.

This sequence belongs to the pseudouridine synthase RluA family.

The enzyme catalyses a uridine in RNA = a pseudouridine in RNA. This is an uncharacterized protein from Helicobacter pylori (strain J99 / ATCC 700824) (Campylobacter pylori J99).